The chain runs to 348 residues: Rhodopsin (348 aa).

M1 is subject to N-acetylmethionine. At M1 to Q36 the chain is on the extracellular side. N-linked (GlcNAc...) asparagine glycans are attached at residues N2 and N15. A helical membrane pass occupies residues F37–V61. Over T62–N73 the chain is Cytoplasmic. The chain crosses the membrane as a helical span at residues Y74–Y96. The Extracellular segment spans residues T97–C110. C110 and C187 are joined by a disulfide. Residues D111–I133 form a helical membrane-spanning segment. A 'Ionic lock' involved in activated form stabilization motif is present at residues E134–Y136. The Cytoplasmic segment spans residues E134–H152. Residues A153 to V173 form a helical membrane-spanning segment. Residues G174–S202 lie on the Extracellular side of the membrane. E201 is a Zn(2+) binding site. Residues F203–G224 traverse the membrane as a helical segment. Topologically, residues Q225–R252 are cytoplasmic. Residues M253–Y274 traverse the membrane as a helical segment. Over I275 to I286 the chain is Extracellular. Zn(2+) is bound at residue Q279. A helical membrane pass occupies residues L287 to M308. An N6-(retinylidene)lysine modification is found at K296. Topologically, residues L309–A348 are cytoplasmic. 2 S-palmitoyl cysteine lipidation sites follow: C322 and C323. Positions D330–A348 are interaction with SAG. S334 bears the Phosphoserine mark. T336 is subject to Phosphothreonine. Position 338 is a phosphoserine (S338). T340 and T342 each carry phosphothreonine. Residue S343 is modified to Phosphoserine.

This sequence belongs to the G-protein coupled receptor 1 family. Opsin subfamily. In terms of assembly, homodimer. May form a complex composed of RHO, GRK1 and RCVRN in a Ca(2+)-dependent manner; RCVRN prevents the interaction between GRK1 and RHO. Interacts with GRK1. Interacts (phosphorylated form) with SAG. Interacts with GNAT1. Interacts with GNAT3. SAG and G-proteins compete for a common binding site. Interacts with PRCD; the interaction promotes PRCD stability. Forms a complex with ASAP1 and ARF4. Forms a complex with ASAP1, RAB11A, Rabin8/RAB3IP, ARF4 and RAB11FIP3; the complex regulates Golgi-to-cilia rhodopsin/RHO transport in photoreceptors. Phosphorylated on some or all of the serine and threonine residues present in the C-terminal region. Post-translationally, contains one covalently linked retinal chromophore. Upon light absorption, the covalently bound 11-cis-retinal is converted to all-trans-retinal. After hydrolysis of the Schiff base and release of the covalently bound all-trans-retinal, active rhodopsin is regenerated by binding of a fresh molecule of 11-cis-retinal.

The protein resides in the membrane. The protein localises to the cell projection. It localises to the cilium. Its subcellular location is the photoreceptor outer segment. Functionally, photoreceptor required for image-forming vision at low light intensity. Required for photoreceptor cell viability after birth. Light-induced isomerization of 11-cis to all-trans retinal triggers a conformational change that activates signaling via G-proteins. Subsequent receptor phosphorylation mediates displacement of the bound G-protein alpha subunit by the arrestin SAG and terminates signaling. This Caluromys philander (Bare-tailed woolly opossum) protein is Rhodopsin (RHO).